Reading from the N-terminus, the 360-residue chain is RNA demethylase ALKBH5 (360 aa).

The disordered stretch occupies residues Met-1–Val-53. Residues Asp-7–Glu-22 are compositionally biased toward basic and acidic residues. Residues Asp-32–Glu-48 are compositionally biased toward acidic residues. The active site involves Tyr-107. 5 residues coordinate 2-oxoglutarate: Asn-161, Tyr-163, His-172, His-234, and Arg-245. Cys-198 and Cys-235 are oxidised to a cystine. Residues Glu-261–His-360 are disordered. Residues Ser-264–Gln-280 show a composition bias toward polar residues. Basic residues predominate over residues His-281 to Arg-290. Composition is skewed to basic and acidic residues over residues Lys-291–Arg-312 and Tyr-330–Thr-340.

The protein belongs to the alkB family. As to quaternary structure, monomer. Fe(2+) is required as a cofactor.

It localises to the nucleus speckle. The enzyme catalyses an N(6)-methyladenosine in mRNA + 2-oxoglutarate + O2 = an adenosine in mRNA + formaldehyde + succinate + CO2. In terms of biological role, dioxygenase that specifically demethylates N(6)-methyladenosine (m6A) RNA, the most prevalent internal modification of messenger RNA (mRNA) in higher eukaryotes. Demethylates RNA by oxidative demethylation, which requires molecular oxygen, alpha-ketoglutarate and iron. Demethylation of m6A mRNA affects mRNA processing, translation and export. This chain is RNA demethylase ALKBH5 (alkbh5), found in Xenopus laevis (African clawed frog).